Consider the following 178-residue polypeptide: Endoribonuclease YbeY (178 aa).

Zn(2+) contacts are provided by H118, H122, and H128. A disordered region spans residues 158 to 178 (ADRQSEKDRRLLDKSRYFDEP).

Belongs to the endoribonuclease YbeY family. The cofactor is Zn(2+).

The protein localises to the cytoplasm. Single strand-specific metallo-endoribonuclease involved in late-stage 70S ribosome quality control and in maturation of the 3' terminus of the 16S rRNA. The protein is Endoribonuclease YbeY of Mycolicibacterium smegmatis (strain ATCC 700084 / mc(2)155) (Mycobacterium smegmatis).